Reading from the N-terminus, the 419-residue chain is Octopressin receptor (419 aa).

Residues 1–37 (MENFTEENLHPWITTTTRVYNNVTIFPQYDDELGKFE) lie on the Extracellular side of the membrane. N-linked (GlcNAc...) asparagine glycosylation is found at Asn3 and Asn22. A helical membrane pass occupies residues 38-58 (IMVLCILCFMALFGNAVVLIV). Residues 59–80 (LRIKKTTLTRMQLLIVYLSVTD) lie on the Cytoplasmic side of the membrane. Residues 81–101 (ISVALFHILPTIILKINVYFL) traverse the membrane as a helical segment. Residues 102-108 (GDISACR) lie on the Extracellular side of the membrane. Cys107 and Cys182 form a disulfide bridge. Residues 109–129 (VYQFITVAELYASSFVLIVTA) form a helical membrane-spanning segment. Topologically, residues 130–153 (LDRYISICHPLAAHMWTNRRVHMT) are cytoplasmic. A helical transmembrane segment spans residues 154 to 174 (TALALFLALMCSLPQLDAVLV). Residues 175 to 192 (DFHGGKLCRPNLTTELAN) lie on the Extracellular side of the membrane. A glycan (N-linked (GlcNAc...) asparagine) is linked at Asn185. A helical membrane pass occupies residues 193–213 (IAYSWWAFCSVFFVPLLLLIF). Residues 214–292 (FYGRICFVVW…VSKSKIKTIK (79 aa)) are Cytoplasmic-facing. Residues 253-274 (SQTSSENRVKNYSDARDKDSSR) are disordered. Residues 259–274 (NRVKNYSDARDKDSSR) are compositionally biased toward basic and acidic residues. The helical transmembrane segment at 293-313 (LTFSVVACFIICYTPFFTVLM) threads the bilayer. At 314–329 (ARTYDAELSSAQTPAL) the chain is on the extracellular side. The chain crosses the membrane as a helical span at residues 330-350 (VILSLLPSLNSCTNPWIYLAF). The Cytoplasmic segment spans residues 351-419 (SGKVWCRQQS…TTALMSSSPC (69 aa)).

This sequence belongs to the G-protein coupled receptor 1 family. Vasopressin/oxytocin receptor subfamily. Present in the nervous system and peripheral tissues.

Its subcellular location is the cell membrane. Functionally, acts as a receptor for octopressin. The polypeptide is Octopressin receptor (Octopus vulgaris (Common octopus)).